The following is a 333-amino-acid chain: tRNA N6-adenosine threonylcarbamoyltransferase (333 aa).

Fe cation-binding residues include histidine 111 and histidine 115. Substrate-binding positions include 134-138 (LVSGG), aspartate 167, glycine 180, and asparagine 272. Aspartate 300 lines the Fe cation pocket.

Belongs to the KAE1 / TsaD family. Requires Fe(2+) as cofactor.

It localises to the cytoplasm. It carries out the reaction L-threonylcarbamoyladenylate + adenosine(37) in tRNA = N(6)-L-threonylcarbamoyladenosine(37) in tRNA + AMP + H(+). Required for the formation of a threonylcarbamoyl group on adenosine at position 37 (t(6)A37) in tRNAs that read codons beginning with adenine. Is involved in the transfer of the threonylcarbamoyl moiety of threonylcarbamoyl-AMP (TC-AMP) to the N6 group of A37, together with TsaE and TsaB. TsaD likely plays a direct catalytic role in this reaction. The polypeptide is tRNA N6-adenosine threonylcarbamoyltransferase (Legionella pneumophila (strain Lens)).